A 278-amino-acid polypeptide reads, in one-letter code: Ribosomal RNA small subunit methyltransferase A (278 aa).

Residues asparagine 25, leucine 27, glycine 52, glutamate 73, aspartate 97, and asparagine 117 each coordinate S-adenosyl-L-methionine.

Belongs to the class I-like SAM-binding methyltransferase superfamily. rRNA adenine N(6)-methyltransferase family. RsmA subfamily.

It is found in the cytoplasm. It carries out the reaction adenosine(1518)/adenosine(1519) in 16S rRNA + 4 S-adenosyl-L-methionine = N(6)-dimethyladenosine(1518)/N(6)-dimethyladenosine(1519) in 16S rRNA + 4 S-adenosyl-L-homocysteine + 4 H(+). Its function is as follows. Specifically dimethylates two adjacent adenosines (A1518 and A1519) in the loop of a conserved hairpin near the 3'-end of 16S rRNA in the 30S particle. May play a critical role in biogenesis of 30S subunits. This chain is Ribosomal RNA small subunit methyltransferase A, found in Desulfitobacterium hafniense (strain DSM 10664 / DCB-2).